We begin with the raw amino-acid sequence, 174 residues long: Methylated-DNA--protein-cysteine methyltransferase (174 aa).

The active-site Nucleophile; methyl group acceptor is Cys141.

Belongs to the MGMT family.

It localises to the cytoplasm. It catalyses the reaction a 6-O-methyl-2'-deoxyguanosine in DNA + L-cysteinyl-[protein] = S-methyl-L-cysteinyl-[protein] + a 2'-deoxyguanosine in DNA. The enzyme catalyses a 4-O-methyl-thymidine in DNA + L-cysteinyl-[protein] = a thymidine in DNA + S-methyl-L-cysteinyl-[protein]. In terms of biological role, involved in the cellular defense against the biological effects of O6-methylguanine (O6-MeG) and O4-methylthymine (O4-MeT) in DNA. Repairs the methylated nucleobase in DNA by stoichiometrically transferring the methyl group to a cysteine residue in the enzyme. This is a suicide reaction: the enzyme is irreversibly inactivated. The chain is Methylated-DNA--protein-cysteine methyltransferase from Thermococcus gammatolerans (strain DSM 15229 / JCM 11827 / EJ3).